Consider the following 110-residue polypeptide: Nucleoid-associated protein bbp_426 (110 aa).

The protein belongs to the YbaB/EbfC family. In terms of assembly, homodimer.

It is found in the cytoplasm. It localises to the nucleoid. Binds to DNA and alters its conformation. May be involved in regulation of gene expression, nucleoid organization and DNA protection. The protein is Nucleoid-associated protein bbp_426 of Buchnera aphidicola subsp. Baizongia pistaciae (strain Bp).